A 689-amino-acid chain; its full sequence is Glycine--tRNA ligase beta subunit (689 aa).

It belongs to the class-II aminoacyl-tRNA synthetase family. In terms of assembly, tetramer of two alpha and two beta subunits.

The protein localises to the cytoplasm. It catalyses the reaction tRNA(Gly) + glycine + ATP = glycyl-tRNA(Gly) + AMP + diphosphate. This chain is Glycine--tRNA ligase beta subunit, found in Shigella flexneri serotype 5b (strain 8401).